We begin with the raw amino-acid sequence, 435 residues long: Diguanylate cyclase TpbB (435 aa).

Topologically, residues 1 to 22 are cytoplasmic; sequence MNRRRRYTGSNPSLRRVLYRAH. Residues 23–43 form a helical membrane-spanning segment; that stretch reads LGVALVAVFTAGLAVTLVGLL. Residues 44–154 lie on the Periplasmic side of the membrane; the sequence is TLRAYADPNQ…VKGSGGSLLR (111 aa). Residues 155–175 traverse the membrane as a helical segment; that stretch reads FLLTGFAGMVLCLLLTALGAF. Residues 176-435 lie on the Cytoplasmic side of the membrane; that stretch reads YLSRRLVRGI…DSATPEAPPK (260 aa). Positions 183-236 constitute an HAMP domain; sequence RGIVGPLDQLAKVAHTVRRERDFEKRVPEAGIAELSQLGEDFNALLDELESWQA. The 137-residue stretch at 279–415 folds into the GGDEF domain; the sequence is EQLAVLFIDS…GSRRLAELND (137 aa). The Mg(2+) site is built by Ser288 and Asp330. Asp330 serves as the catalytic Proton acceptor. The span at 414 to 426 shows a compositional bias: basic and acidic residues; that stretch reads NDPRILQEEKEID. Positions 414–435 are disordered; that stretch reads NDPRILQEEKEIDSATPEAPPK.

It depends on Mg(2+) as a cofactor. Phosphorylated at both Tyr residues and Ser/Thr residues. Dephosphorylated and inactivated by TpbA.

The protein localises to the cell inner membrane. The catalysed reaction is 2 GTP = 3',3'-c-di-GMP + 2 diphosphate. It participates in purine metabolism; 3',5'-cyclic di-GMP biosynthesis. With respect to regulation, activity is tightly controlled by YfiR, a small periplasmic protein, and the OmpA/Pal-like outer-membrane lipoprotein YfiB. Diguanylate cyclase activity is inhibited by the specific interaction of YfiR with the TpbB periplasmic domain and is activated by YfiB, which releases the YfiR-mediated repression through sequestration of YfiR to the outer membrane. Activity is also controlled by dephosphorylation of the periplasmic domain by the tyrosine phosphatase TpbA. Catalyzes the synthesis of cyclic-di-GMP (c-di-GMP) via the condensation of 2 GTP molecules. Important for the regulation of biofilm maintenance when exposed to peroxide. Its function is as follows. Part of the YfiB-TpbB-YfiR (or yfiBNR) system, encoding a tripartite signaling module that modulates intracellular c-di-GMP levels. The system is a key regulator of the small colony variant (SCV) phenotype, and plays an important role in biofilm formation and in vivo persistence. The c-di-GMP produced by TpbB/YfiN stimulates the production of the Pel and Psl exopolysaccharides, which promotes surface attachment, generates an SCV phenotype and confers resistance against phagocytosis. The polypeptide is Diguanylate cyclase TpbB (Pseudomonas aeruginosa (strain UCBPP-PA14)).